We begin with the raw amino-acid sequence, 100 residues long: Aspartyl/glutamyl-tRNA(Asn/Gln) amidotransferase subunit C (100 aa).

It belongs to the GatC family. In terms of assembly, heterotrimer of A, B and C subunits.

The catalysed reaction is L-glutamyl-tRNA(Gln) + L-glutamine + ATP + H2O = L-glutaminyl-tRNA(Gln) + L-glutamate + ADP + phosphate + H(+). It catalyses the reaction L-aspartyl-tRNA(Asn) + L-glutamine + ATP + H2O = L-asparaginyl-tRNA(Asn) + L-glutamate + ADP + phosphate + 2 H(+). Allows the formation of correctly charged Asn-tRNA(Asn) or Gln-tRNA(Gln) through the transamidation of misacylated Asp-tRNA(Asn) or Glu-tRNA(Gln) in organisms which lack either or both of asparaginyl-tRNA or glutaminyl-tRNA synthetases. The reaction takes place in the presence of glutamine and ATP through an activated phospho-Asp-tRNA(Asn) or phospho-Glu-tRNA(Gln). This Streptococcus agalactiae serotype Ia (strain ATCC 27591 / A909 / CDC SS700) protein is Aspartyl/glutamyl-tRNA(Asn/Gln) amidotransferase subunit C.